A 74-amino-acid chain; its full sequence is Small ribosomal subunit protein eS28 (74 aa).

This sequence belongs to the eukaryotic ribosomal protein eS28 family.

The sequence is that of Small ribosomal subunit protein eS28 from Halorubrum lacusprofundi (strain ATCC 49239 / DSM 5036 / JCM 8891 / ACAM 34).